The primary structure comprises 451 residues: Enolase (451 aa).

Residue Gln-167 coordinates (2R)-2-phosphoglycerate. Catalysis depends on Glu-209, which acts as the Proton donor. Positions 250, 307, and 334 each coordinate Mg(2+). The (2R)-2-phosphoglycerate site is built by Lys-359, Arg-388, Ser-389, and Lys-410. Catalysis depends on Lys-359, which acts as the Proton acceptor.

It belongs to the enolase family. Mg(2+) serves as cofactor.

It is found in the cytoplasm. The protein localises to the secreted. Its subcellular location is the cell surface. The catalysed reaction is (2R)-2-phosphoglycerate = phosphoenolpyruvate + H2O. Its pathway is carbohydrate degradation; glycolysis; pyruvate from D-glyceraldehyde 3-phosphate: step 4/5. In terms of biological role, catalyzes the reversible conversion of 2-phosphoglycerate (2-PG) into phosphoenolpyruvate (PEP). It is essential for the degradation of carbohydrates via glycolysis. This Mesomycoplasma hyopneumoniae (strain J / ATCC 25934 / NCTC 10110) (Mycoplasma hyopneumoniae) protein is Enolase.